The following is a 398-amino-acid chain: Subtilisin-like protease CPC735_015300 (398 aa).

An N-terminal signal peptide occupies residues 1 to 19 (MGFIKTLSLSLAAASAANA). A propeptide spanning residues 20-116 (AKILSPSRPD…IEHDHVVRLT (97 aa)) is cleaved from the precursor. The 81-residue stretch at 35–115 (QYIVVMKDGV…FIEHDHVVRL (81 aa)) folds into the Inhibitor I9 domain. In terms of domain architecture, Peptidase S8 spans 126-398 (TWGLGRVSHQ…NKLTYNGNGQ (273 aa)). Residues Asp-158 and His-189 each act as charge relay system in the active site. An N-linked (GlcNAc...) asparagine glycan is attached at Asn-250. The Charge relay system role is filled by Ser-344. The N-linked (GlcNAc...) asparagine glycan is linked to Asn-362.

It belongs to the peptidase S8 family.

Its subcellular location is the secreted. Functionally, secreted subtilisin-like serine protease with keratinolytic activity that contributes to pathogenicity. The protein is Subtilisin-like protease CPC735_015300 of Coccidioides posadasii (strain C735) (Valley fever fungus).